The sequence spans 477 residues: Diphthine methyltransferase (477 aa).

WD repeat units follow at residues 194-232 (HFEA…TPVF), 236-276 (RHCM…QPLA), and 422-464 (VKTR…ARTL).

Belongs to the DPH7 family. As to quaternary structure, interacts with INCA1.

The enzyme catalyses diphthine methyl ester-[translation elongation factor 2] + H2O = diphthine-[translation elongation factor 2] + methanol + H(+). The protein operates within protein modification; peptidyl-diphthamide biosynthesis. In terms of biological role, catalyzes the demethylation of diphthine methyl ester to form diphthine, an intermediate diphthamide biosynthesis, a post-translational modification of histidine which occurs in translation elongation factor 2 (EEF2). This Mus musculus (Mouse) protein is Diphthine methyltransferase (Dph7).